The sequence spans 926 residues: Probable zinc protease PqqL (926 aa).

His-79 provides a ligand contact to Zn(2+). Glu-82 functions as the Proton acceptor in the catalytic mechanism. Zn(2+) is bound by residues His-83 and Glu-159.

The protein belongs to the peptidase M16 family. It depends on Zn(2+) as a cofactor.

This Haemophilus influenzae (strain ATCC 51907 / DSM 11121 / KW20 / Rd) protein is Probable zinc protease PqqL (pqqL).